We begin with the raw amino-acid sequence, 108 residues long: Histone H4 (108 aa).

The segment at 1–36 is disordered; it reads MSSAQSRGGKTGGKVGGKVGAKRHKKTQKEHINGIT. Residues 9–19 are compositionally biased toward gly residues; the sequence is GKTGGKVGGKV.

Belongs to the histone H4 family. The nucleosome is a histone octamer containing two molecules each of H2A, H2B, H3 and H4 assembled in one H3-H4 heterotetramer and two H2A-H2B heterodimers. The octamer wraps approximately 147 bp of DNA.

The protein resides in the nucleus. The protein localises to the chromosome. Its function is as follows. Core component of nucleosome. Nucleosomes wrap and compact DNA into chromatin, limiting DNA accessibility to the cellular machineries which require DNA as a template. Histones thereby play a central role in transcription regulation, DNA repair, DNA replication and chromosomal stability. DNA accessibility is regulated via a complex set of post-translational modifications of histones, also called histone code, and nucleosome remodeling. This is Histone H4 (H4a) from Dictyostelium discoideum (Social amoeba).